A 170-amino-acid chain; its full sequence is Ureidoglycolate lyase (170 aa).

It belongs to the ureidoglycolate lyase family. Homodimer. Ni(2+) is required as a cofactor.

The enzyme catalyses (S)-ureidoglycolate = urea + glyoxylate. The protein operates within nitrogen metabolism; (S)-allantoin degradation. In terms of biological role, catalyzes the catabolism of the allantoin degradation intermediate (S)-ureidoglycolate, generating urea and glyoxylate. Involved in the utilization of allantoin as nitrogen source. The polypeptide is Ureidoglycolate lyase (Pseudomonas syringae pv. tomato (strain ATCC BAA-871 / DC3000)).